A 247-amino-acid polypeptide reads, in one-letter code: Adiponectin (247 aa).

An N-terminal signal peptide occupies residues 1–17 (MLLLQALLFLLILPSHA). 2 O-linked (GalNAc...) threonine glycosylation sites follow: T23 and T24. Residue K36 is modified to 5-hydroxylysine. Residue C39 is modified to S-(2-succinyl)cysteine. A disordered region spans residues 44–105 (AGIPGHPGHN…GFPGTPGRKG (62 aa)). The 66-residue stretch at 45 to 110 (GIPGHPGHNG…PGRKGEPGEA (66 aa)) folds into the Collagen-like domain. 4-hydroxyproline occurs at positions 47, 50, and 56. Residues 58–73 (RDGRDGTPGEKGEKGD) show a composition bias toward basic and acidic residues. 5-hydroxylysine; alternate occurs at positions 68, 71, and 80. O-linked (Gal...) hydroxylysine; alternate glycosylation is found at K68, K71, and K80. P94 is modified (4-hydroxyproline). Residue K104 is modified to 5-hydroxylysine; alternate. A glycan (O-linked (Gal...) hydroxylysine; alternate) is linked at K104. Residues 111–247 (AYVYRSAFSV…TGFLLYHDTN (137 aa)) form the C1q domain.

As to quaternary structure, homomultimer. Forms trimers, hexamers and 12- to 18-mers. The trimers (low molecular weight complexes / LMW) are assembled via non-covalent interactions of the collagen-like domains in a triple helix and hydrophobic interactions within the globular C1q domain. Several trimers can associate to form disulfide-linked hexamers (middle molecular weight complexes / MMW) and larger complexes (higher molecular weight / HMW). The HMW-complex assembly is also modulated by the degree of lysine hydroxylation and glycosylation. LMW, MMW and HMW complexes bind to HBEGF, MMW and HMW complexes bind to PDGFB, and HMW complex binds to FGF2. Interacts with CTRP9 via the C1q domain (heterotrimeric complex). Post-translationally, HMW complexes are more extensively glycosylated than smaller oligomers. Hydroxylation and glycosylation of the lysine residues within the collagen-like domain of adiponectin seem to be critically involved in regulating the formation and/or secretion of HMW complexes and consequently contribute to the insulin-sensitizing activity of adiponectin in hepatocytes. In terms of processing, O-glycosylated. Not N-glycosylated O-linked glycans on hydroxylysine residues consist of Glc-Gal disaccharides bound to the oxygen atom of post-translationally added hydroxyl groups. O-linked glycosylation in the N-terminal is disialylated with the structure Neu5Acalpha2-&gt;8Neu5Acalpha2-&gt;3Gal. Sialylated by alpha 2,8-sialyltransferase III. Succination of Cys-39 by the Krebs cycle intermediate fumarate, which leads to S-(2-succinyl)cysteine residues, inhibits polymerization and secretion of adiponectin. Adiponectin is a major target for succination in both adipocytes and adipose tissue of diabetic mice. It was proposed that succination of proteins is a biomarker of mitochondrial stress and accumulation of Krebs cycle intermediates in adipose tissue in diabetes and that succination of adiponectin may contribute to the decrease in plasma adiponectin in diabetes. Synthesized exclusively by adipocytes and secreted into plasma.

The protein localises to the secreted. Its activity is regulated as follows. Polymerization and secretion of adiponectin is inhibited by succination of cysteine residues by the Krebs cycle intermediate fumarate, which leads to S-(2-succinyl)cysteine residues. Important adipokine involved in the control of fat metabolism and insulin sensitivity, with direct anti-diabetic, anti-atherogenic and anti-inflammatory activities. Stimulates AMPK phosphorylation and activation in the liver and the skeletal muscle, enhancing glucose utilization and fatty-acid combustion. Antagonizes TNF-alpha by negatively regulating its expression in various tissues such as liver and macrophages, and also by counteracting its effects. Inhibits endothelial NF-kappa-B signaling through a cAMP-dependent pathway. May play a role in cell growth, angiogenesis and tissue remodeling by binding and sequestering various growth factors with distinct binding affinities, depending on the type of complex, LMW, MMW or HMW. This is Adiponectin (Adipoq) from Mus musculus (Mouse).